The following is a 330-amino-acid chain: Laforin (330 aa).

The CBM20 domain occupies 1–123 (MLFRFGVVVP…DNLVDGVYCL (123 aa)). A Phosphoserine; by AMPK modification is found at Ser-25. Substrate contacts are provided by residues Trp-32, Lys-86, 102 to 106 (GPHHD), Asp-196, Asp-234, and Arg-240. The Tyrosine-protein phosphatase domain maps to 155–322 (HYSRILPNIW…QQDFSQKFGK (168 aa)). Cys-265 functions as the Phosphocysteine intermediate in the catalytic mechanism. Residues 265–271 (CNAGVGR) carry the Glucan phosphatase signature motif CXAGXGR motif. Substrate is bound by residues 266 to 271 (NAGVGR) and Tyr-303.

Belongs to the protein-tyrosine phosphatase family. As to quaternary structure, homodimer. Interacts with PPP1R3B, PPP1R3C, HIRIP5, and EPM2AIP1. Binds glycogen and Lafora bodies. Interacts with NHLRC1/malin (via the NHL repeats). Forms a complex with NHLRC1/malin and HSP70. Interacts with PPP1R3D; in the presence of NHLC1/malin the interaction leads to ubiquitination and autophagic degradation of PPP1R3D. Interacts (via the phosphatase domain) with MAPT/Tau; the interaction dephosphorylates MAPT. Interacts with PRDM8. Polyubiquitinated by NHLRC1/malin. Post-translationally, phosphorylation on Ser-25 by AMPK affects the phosphatase activity of the enzyme and its ability to homodimerize and interact with NHLRC1, PPP1R3C or PRKAA2. In terms of tissue distribution, detected in skeletal muscle and in brain (at protein level). Widely expressed. Higher levels of expression are found in heart, brain, liver, skeletal muscle and kidney.

The protein localises to the cytoplasm. It localises to the endoplasmic reticulum membrane. It is found in the cell membrane. The catalysed reaction is O-phospho-L-tyrosyl-[protein] + H2O = L-tyrosyl-[protein] + phosphate. It carries out the reaction O-phospho-L-seryl-[protein] + H2O = L-seryl-[protein] + phosphate. It catalyses the reaction O-phospho-L-threonyl-[protein] + H2O = L-threonyl-[protein] + phosphate. Plays an important role in preventing glycogen hyperphosphorylation and the formation of insoluble aggregates, via its activity as glycogen phosphatase, and by promoting the ubiquitination of proteins involved in glycogen metabolism via its interaction with the E3 ubiquitin ligase NHLRC1/malin. Dephosphorylates phosphotyrosine and synthetic substrates, such as para-nitrophenylphosphate (pNPP), and has low activity with phosphoserine and phosphothreonine substrates (in vitro). Has also been shown to dephosphorylate MAPT. Shows strong phosphatase activity towards complex carbohydrates in vitro, avoiding glycogen hyperphosphorylation which is associated with reduced branching and formation of insoluble aggregates. Forms a complex with NHLRC1/malin and HSP70, which suppresses the cellular toxicity of misfolded proteins by promoting their degradation through the ubiquitin-proteasome system (UPS). Acts as a scaffold protein to facilitate PPP1R3C/PTG ubiquitination by NHLRC1/malin. Also promotes proteasome-independent protein degradation through the macroautophagy pathway. This is Laforin (Epm2a) from Mus musculus (Mouse).